Consider the following 428-residue polypeptide: Aerobic C4-dicarboxylate transport protein (428 aa).

8 consecutive transmembrane segments (helical) span residues 5 to 27 (LFKS…GHFY), 47 to 64 (MIIA…IAGM), 77 to 99 (ALLY…VNVV), 141 to 163 (VIGA…FGFA), 184 to 206 (VIFG…AMAF), 219 to 241 (LGQL…LGSI), 326 to 348 (IVHQ…GVTG), and 352 to 374 (IVLA…LILG).

The protein belongs to the dicarboxylate/amino acid:cation symporter (DAACS) (TC 2.A.23) family.

The protein localises to the cell inner membrane. Responsible for the aerobic transport of the dicarboxylates fumarate and malate and to a lesser extent succinate, from the periplasm across the inner membrane. This chain is Aerobic C4-dicarboxylate transport protein, found in Escherichia coli O157:H7.